We begin with the raw amino-acid sequence, 312 residues long: Ribosomal RNA small subunit methyltransferase H (312 aa).

The disordered stretch occupies residues 1–24 (MNIMTANQGAVSPSQTESEASPPT). Residues 55 to 57 (AGH), Asp72, Tyr96, Asp117, and Gln124 each bind S-adenosyl-L-methionine. The interval 288–312 (EQVDNPRARSAKLRVGERAAAPEGS) is disordered.

The protein belongs to the methyltransferase superfamily. RsmH family.

Its subcellular location is the cytoplasm. The enzyme catalyses cytidine(1402) in 16S rRNA + S-adenosyl-L-methionine = N(4)-methylcytidine(1402) in 16S rRNA + S-adenosyl-L-homocysteine + H(+). Its function is as follows. Specifically methylates the N4 position of cytidine in position 1402 (C1402) of 16S rRNA. The polypeptide is Ribosomal RNA small subunit methyltransferase H (Deinococcus radiodurans (strain ATCC 13939 / DSM 20539 / JCM 16871 / CCUG 27074 / LMG 4051 / NBRC 15346 / NCIMB 9279 / VKM B-1422 / R1)).